We begin with the raw amino-acid sequence, 451 residues long: UDP-N-acetylmuramoylalanine--D-glutamate ligase (451 aa).

119–125 contacts ATP; the sequence is GSNGKTT.

This sequence belongs to the MurCDEF family.

The protein localises to the cytoplasm. The enzyme catalyses UDP-N-acetyl-alpha-D-muramoyl-L-alanine + D-glutamate + ATP = UDP-N-acetyl-alpha-D-muramoyl-L-alanyl-D-glutamate + ADP + phosphate + H(+). Its pathway is cell wall biogenesis; peptidoglycan biosynthesis. Cell wall formation. Catalyzes the addition of glutamate to the nucleotide precursor UDP-N-acetylmuramoyl-L-alanine (UMA). The chain is UDP-N-acetylmuramoylalanine--D-glutamate ligase from Bacillus cytotoxicus (strain DSM 22905 / CIP 110041 / 391-98 / NVH 391-98).